A 282-amino-acid polypeptide reads, in one-letter code: MRLFKKRNTISERHVKANKRAEDLVPSGLMQRCPNCGLEFFARRLDKYKTCPDCDYGFRLTARERLAWLCEESEEWFKDIQPSDPLHFPNYEAKVAAGKKKTGLNEAVWTGLAKIGGQETALAIMDPFFIMGSLGQMTGEKLTRLIEAATEKRLPVVVFTASGGARMQEGIYSLMQMAKVVNAINRHKAAGLLYLVVLTDPTTGGVTASFASEGDITLAEAHAMVAFAGRRVIEQTIHEQLPKDAQRAETVLKHGFIDRIVLRQEEKETLAWLLKYGGMQDD.

A CoA carboxyltransferase N-terminal domain is found at 29–282 (LMQRCPNCGL…LLKYGGMQDD (254 aa)). Zn(2+) is bound by residues cysteine 33, cysteine 36, cysteine 51, and cysteine 54. Residues 33–54 (CPNCGLEFFARRLDKYKTCPDC) form a C4-type zinc finger.

This sequence belongs to the AccD/PCCB family. Acetyl-CoA carboxylase is a heterohexamer composed of biotin carboxyl carrier protein (AccB), biotin carboxylase (AccC) and two subunits each of ACCase subunit alpha (AccA) and ACCase subunit beta (AccD). Zn(2+) serves as cofactor.

The protein resides in the cytoplasm. The enzyme catalyses N(6)-carboxybiotinyl-L-lysyl-[protein] + acetyl-CoA = N(6)-biotinyl-L-lysyl-[protein] + malonyl-CoA. It participates in lipid metabolism; malonyl-CoA biosynthesis; malonyl-CoA from acetyl-CoA: step 1/1. In terms of biological role, component of the acetyl coenzyme A carboxylase (ACC) complex. Biotin carboxylase (BC) catalyzes the carboxylation of biotin on its carrier protein (BCCP) and then the CO(2) group is transferred by the transcarboxylase to acetyl-CoA to form malonyl-CoA. In Lactobacillus delbrueckii subsp. bulgaricus (strain ATCC BAA-365 / Lb-18), this protein is Acetyl-coenzyme A carboxylase carboxyl transferase subunit beta.